A 533-amino-acid chain; its full sequence is D-3-phosphoglycerate dehydrogenase (533 aa).

Alanine 2 is subject to N-acetylalanine. Serine 14 is modified (phosphoserine). Lysine 21 is subject to N6-acetyllysine; alternate. Residue lysine 21 forms a Glycyl lysine isopeptide (Lys-Gly) (interchain with G-Cter in SUMO1); alternate linkage. Lysine 21 is covalently cross-linked (Glycyl lysine isopeptide (Lys-Gly) (interchain with G-Cter in SUMO2); alternate). Lysine 58 carries the post-translational modification N6-acetyllysine. Residues threonine 78, 155 to 156, aspartate 175, threonine 207, 234 to 236, and aspartate 260 each bind NAD(+); these read RI and CAR. Threonine 78 bears the Phosphothreonine mark. Residue arginine 236 is part of the active site. Glutamate 265 is a catalytic residue. The active-site Proton donor is the histidine 283. 283–286 is an NAD(+) binding site; it reads HLGA.

It belongs to the D-isomer specific 2-hydroxyacid dehydrogenase family. In terms of assembly, homotetramer. As to expression, liver, kidney, brain, testis.

The catalysed reaction is (2R)-3-phosphoglycerate + NAD(+) = 3-phosphooxypyruvate + NADH + H(+). The protein operates within amino-acid biosynthesis; L-serine biosynthesis; L-serine from 3-phospho-D-glycerate: step 1/3. Its function is as follows. Catalyzes the reversible oxidation of 3-phospho-D-glycerate to 3-phosphonooxypyruvate, the first step of the phosphorylated L-serine biosynthesis pathway. Does not catalyze the reversible oxidation of 2-hydroxyglutarate to 2-oxoglutarate and the reversible oxidation of (S)-malate to oxaloacetate. This Rattus norvegicus (Rat) protein is D-3-phosphoglycerate dehydrogenase (Phgdh).